The following is a 180-amino-acid chain: Large ribosomal subunit protein uL5 (180 aa).

Belongs to the universal ribosomal protein uL5 family. Part of the 50S ribosomal subunit; part of the 5S rRNA/L5/L18/L25 subcomplex. Contacts the 5S rRNA and the P site tRNA. Forms a bridge to the 30S subunit in the 70S ribosome.

This is one of the proteins that bind and probably mediate the attachment of the 5S RNA into the large ribosomal subunit, where it forms part of the central protuberance. In the 70S ribosome it contacts protein S13 of the 30S subunit (bridge B1b), connecting the 2 subunits; this bridge is implicated in subunit movement. Contacts the P site tRNA; the 5S rRNA and some of its associated proteins might help stabilize positioning of ribosome-bound tRNAs. The protein is Large ribosomal subunit protein uL5 of Roseiflexus sp. (strain RS-1).